Consider the following 182-residue polypeptide: Transcriptional repressor NrdR (182 aa).

The segment at 1–24 is disordered; the sequence is MRCPYCGGLDTQVRDSRPTEDNTA. Residues 3–34 fold into a zinc finger; sequence CPYCGGLDTQVRDSRPTEDNTAIRRRRICPDC. A compositionally biased stretch (basic and acidic residues) spans 12–24; sequence QVRDSRPTEDNTA. Residues 49 to 139 enclose the ATP-cone domain; that stretch reads LMVLKRSGRR…VYRNFREAKD (91 aa). A disordered region spans residues 146 to 182; that stretch reads ELSQPELAQSDDVKAEGGAEGGRDKPKAAGKPPRSAE. A compositionally biased stretch (basic and acidic residues) spans 156-172; that stretch reads DDVKAEGGAEGGRDKPK.

The protein belongs to the NrdR family. Requires Zn(2+) as cofactor.

Negatively regulates transcription of bacterial ribonucleotide reductase nrd genes and operons by binding to NrdR-boxes. The sequence is that of Transcriptional repressor NrdR from Xanthobacter autotrophicus (strain ATCC BAA-1158 / Py2).